A 173-amino-acid chain; its full sequence is Protein tyrosine phosphatase type IVA 3 (173 aa).

A Tyrosine-protein phosphatase domain is found at Ala-8–Lys-161. A disulfide bridge links Cys-49 with Cys-104. Asp-72 serves as the catalytic Proton donor. Residue Cys-104 is the Phosphocysteine intermediate of the active site. Substrate is bound at residue Arg-110. A Cysteine methyl ester modification is found at Cys-170. Residue Cys-170 is the site of S-farnesyl cysteine attachment. A propeptide spans Cys-171–Met-173 (removed in mature form).

This sequence belongs to the protein-tyrosine phosphatase family. As to quaternary structure, interacts with tubulin. Post-translationally, farnesylated. Farnesylation is required for membrane targeting. Unfarnesylated forms are shifted into the nucleus.

It localises to the cell membrane. The protein resides in the early endosome. The enzyme catalyses O-phospho-L-tyrosyl-[protein] + H2O = L-tyrosyl-[protein] + phosphate. Inhibited by sodium orthovanadate and peroxovanadium compounds, and by pentamidine. Protein tyrosine phosphatase which stimulates progression from G1 into S phase during mitosis. Enhances cell proliferation, cell motility and invasive activity, and promotes cancer metastasis. May be involved in the progression of cardiac hypertrophy by inhibiting intracellular calcium mobilization in response to angiotensin II. This chain is Protein tyrosine phosphatase type IVA 3 (PTP4A3), found in Bos taurus (Bovine).